The sequence spans 249 residues: Probable transcriptional regulatory protein mll3945 (249 aa).

Belongs to the TACO1 family.

It localises to the cytoplasm. In Mesorhizobium japonicum (strain LMG 29417 / CECT 9101 / MAFF 303099) (Mesorhizobium loti (strain MAFF 303099)), this protein is Probable transcriptional regulatory protein mll3945.